A 235-amino-acid polypeptide reads, in one-letter code: Cytidylate kinase (235 aa).

ATP is bound at residue 16–24 (GPAASGKST).

Belongs to the cytidylate kinase family. Type 1 subfamily.

The protein localises to the cytoplasm. The catalysed reaction is CMP + ATP = CDP + ADP. It catalyses the reaction dCMP + ATP = dCDP + ADP. In Chlorobaculum tepidum (strain ATCC 49652 / DSM 12025 / NBRC 103806 / TLS) (Chlorobium tepidum), this protein is Cytidylate kinase.